Here is an 81-residue protein sequence, read N- to C-terminus: Trefoil factor 3 (81 aa).

Residues 1-22 (METRAFWTTLLLVLVAGSSCKA) form the signal peptide. A P-type domain is found at 31-74 (SQCMVPANVRVDCGYPTVTSEQCNNRGCCFDSSIPNVPWCFKPL). 3 disulfides stabilise this stretch: Cys-33–Cys-59, Cys-43–Cys-58, and Cys-53–Cys-70.

As to quaternary structure, monomer. Homodimer; disulfide-linked. As to expression, expressed in goblet cells of the intestines, and colon, in paraventricular hypothalamus and supraoptic nuclei. Weakly expressed in gastric epithelial cells (at protein level). Expressed by goblet cells of small and large intestinal epithelia, kidney and stomach. Expressed in the paraventricular hypothalamus, arcuate nucleus and amygdala of the brain. Weakly expressed in gastric epithelial cells.

It localises to the secreted. Its subcellular location is the extracellular space. It is found in the extracellular matrix. The protein resides in the cytoplasm. Its function is as follows. Involved in the maintenance and repair of the intestinal mucosa. Promotes the mobility of epithelial cells in healing processes (motogen). The sequence is that of Trefoil factor 3 (Tff3) from Rattus norvegicus (Rat).